The following is a 683-amino-acid chain: Boron transporter 4 (683 aa).

Residues 1 to 38 (MEEERVDSSKRLFRGIVADLRGRALCYKEDWVAGLRSG) lie on the Cytoplasmic side of the membrane. A helical transmembrane segment spans residues 39-59 (FGILAPTTYIFFASALPVIAF). Residues 60–80 (GEQLSRDTEGALSTVETLAST) lie on the Extracellular side of the membrane. A helical membrane pass occupies residues 81–101 (ALCGVIHSILGGQPLLILGVA). Residues 102–126 (EPTVLMYVYLYNFAIGRPELGKQLY) are Cytoplasmic-facing. The helical transmembrane segment at 127–147 (LAWAAWVCVWTALLLFVMAIL) threads the bilayer. Residues 148-160 (NTADIINRFTRVA) lie on the Extracellular side of the membrane. A helical membrane pass occupies residues 161–181 (GELFGMLISVLFIQQAIKGMV). Residues 182–200 (SEFGMPKDEDSKLEKYKFE) lie on the Cytoplasmic side of the membrane. A helical transmembrane segment spans residues 201-221 (WLYTNGLLGLIFTFGLLYTAL). The Extracellular portion of the chain corresponds to 222 to 238 (KSRKARSWRYGTGWYRS). A helical membrane pass occupies residues 239–259 (FIADYGVPLMVVVWTALSFST). The Cytoplasmic portion of the chain corresponds to 260-294 (PSKLPSGVPRRLFSPLPWDSPSLSHWTVIKDMGKV). The chain crosses the membrane as a helical span at residues 295–315 (SPGYIFAAFIPALMIAGLYFF). Topologically, residues 316 to 335 (DHSVASQLAQQKEFNLKKPS) are extracellular. Residues 336 to 356 (AYHYDILLLGFMTLICGLLGL) form a helical membrane-spanning segment. Topologically, residues 357-477 (PPSNGVLPQS…EQRVSNLLQS (121 aa)) are cytoplasmic. A helical transmembrane segment spans residues 478–498 (LLVAGAVLAMPAIKLIPTSIL). The Extracellular portion of the chain corresponds to 499–565 (WGYFAYMAID…QIFYFGLCYG (67 aa)). Residues 566 to 586 (VTWIPVAGIMFPVPFFLLIAI) form a helical membrane-spanning segment. Residues 587–683 (RQYILPKLFN…GDGDMSTTRE (97 aa)) lie on the Cytoplasmic side of the membrane. Disordered regions lie at residues 617-638 (NPLE…GDAE) and 661-683 (KGNQ…TTRE).

The protein belongs to the anion exchanger (TC 2.A.31.3) family. Expressed in the distal sides of epidermal cells in the elongation zone of roots.

The protein localises to the membrane. Its function is as follows. Efflux-type boron transporter polarly localized in roots. Boron is essential for maintaining the integrity of plants cell walls. The polypeptide is Boron transporter 4 (BOR4) (Arabidopsis thaliana (Mouse-ear cress)).